The primary structure comprises 303 residues: Serine/threonine-protein phosphatase PP-X homolog 2 (303 aa).

The Mn(2+) site is built by D51, H53, D79, and N111. H112 (proton donor) is an active-site residue. 2 residues coordinate Mn(2+): H161 and H235.

Belongs to the PPP phosphatase family. PP-4 (PP-X) subfamily. Mn(2+) serves as cofactor.

The catalysed reaction is O-phospho-L-seryl-[protein] + H2O = L-seryl-[protein] + phosphate. It catalyses the reaction O-phospho-L-threonyl-[protein] + H2O = L-threonyl-[protein] + phosphate. This Paramecium tetraurelia protein is Serine/threonine-protein phosphatase PP-X homolog 2 (Ppx2).